A 355-amino-acid chain; its full sequence is 3-dehydroquinate synthase (355 aa).

NAD(+) contacts are provided by residues 71–76 (EGEERK), 105–109 (GVVGD), 129–130 (TS), lysine 142, and lysine 151. Zn(2+) is bound by residues glutamate 184, histidine 246, and histidine 263.

The protein belongs to the sugar phosphate cyclases superfamily. Dehydroquinate synthase family. Co(2+) serves as cofactor. Zn(2+) is required as a cofactor. Requires NAD(+) as cofactor.

The protein localises to the cytoplasm. The enzyme catalyses 7-phospho-2-dehydro-3-deoxy-D-arabino-heptonate = 3-dehydroquinate + phosphate. The protein operates within metabolic intermediate biosynthesis; chorismate biosynthesis; chorismate from D-erythrose 4-phosphate and phosphoenolpyruvate: step 2/7. Catalyzes the conversion of 3-deoxy-D-arabino-heptulosonate 7-phosphate (DAHP) to dehydroquinate (DHQ). This Streptococcus pneumoniae (strain 70585) protein is 3-dehydroquinate synthase.